The chain runs to 326 residues: Heat-inducible transcription repressor HrcA (326 aa).

Belongs to the HrcA family.

Functionally, negative regulator of class I heat shock genes (grpE-dnaK-dnaJ and groELS operons). Prevents heat-shock induction of these operons. The polypeptide is Heat-inducible transcription repressor HrcA (Staphylococcus saprophyticus subsp. saprophyticus (strain ATCC 15305 / DSM 20229 / NCIMB 8711 / NCTC 7292 / S-41)).